Reading from the N-terminus, the 101-residue chain is Small ribosomal subunit protein uS14 (101 aa).

Belongs to the universal ribosomal protein uS14 family. In terms of assembly, part of the 30S ribosomal subunit. Contacts proteins S3 and S10.

In terms of biological role, binds 16S rRNA, required for the assembly of 30S particles and may also be responsible for determining the conformation of the 16S rRNA at the A site. The sequence is that of Small ribosomal subunit protein uS14 from Caulobacter vibrioides (strain ATCC 19089 / CIP 103742 / CB 15) (Caulobacter crescentus).